A 211-amino-acid chain; its full sequence is Protein-L-isoaspartate O-methyltransferase (211 aa).

Ser60 is an active-site residue.

Belongs to the methyltransferase superfamily. L-isoaspartyl/D-aspartyl protein methyltransferase family.

The protein resides in the cytoplasm. It carries out the reaction [protein]-L-isoaspartate + S-adenosyl-L-methionine = [protein]-L-isoaspartate alpha-methyl ester + S-adenosyl-L-homocysteine. Functionally, catalyzes the methyl esterification of L-isoaspartyl residues in peptides and proteins that result from spontaneous decomposition of normal L-aspartyl and L-asparaginyl residues. It plays a role in the repair and/or degradation of damaged proteins. The sequence is that of Protein-L-isoaspartate O-methyltransferase from Pseudomonas syringae pv. syringae (strain B728a).